The chain runs to 84 residues: Cytochrome b559 subunit alpha (84 aa).

A helical transmembrane segment spans residues 22 to 36 (VIHSITIPSLFVAGW). H24 is a binding site for heme.

Belongs to the PsbE/PsbF family. As to quaternary structure, heterodimer of an alpha subunit and a beta subunit. PSII is composed of 1 copy each of membrane proteins PsbA, PsbB, PsbC, PsbD, PsbE, PsbF, PsbH, PsbI, PsbJ, PsbK, PsbL, PsbM, PsbT, PsbX, PsbY, PsbZ, Psb30/Ycf12, at least 3 peripheral proteins of the oxygen-evolving complex and a large number of cofactors. It forms dimeric complexes. It depends on heme b as a cofactor.

It localises to the plastid. It is found in the chloroplast thylakoid membrane. Functionally, this b-type cytochrome is tightly associated with the reaction center of photosystem II (PSII). PSII is a light-driven water:plastoquinone oxidoreductase that uses light energy to abstract electrons from H(2)O, generating O(2) and a proton gradient subsequently used for ATP formation. It consists of a core antenna complex that captures photons, and an electron transfer chain that converts photonic excitation into a charge separation. The sequence is that of Cytochrome b559 subunit alpha from Gracilaria tenuistipitata var. liui (Red alga).